We begin with the raw amino-acid sequence, 267 residues long: Alkaline ceramidase 3 (267 aa).

Residues 1–33 (MAPAVDRKGYWGPTTSTLDWCEENYVVTLFVAE) are Cytoplasmic-facing. The Ca(2+) site is built by aspartate 19, tryptophan 20, glutamate 22, asparagine 24, and glutamate 33. The helical transmembrane segment at 34–55 (FWNTVSNLIMIIPPIFGAIQGI) threads the bilayer. Topologically, residues 56–61 (RDRLEK) are lumenal. The chain crosses the membrane as a helical span at residues 62–82 (RYIAAYLALTVVGMGSWCFHM). Position 81 (histidine 81) interacts with Zn(2+). At 83-87 (TLKYE) the chain is on the cytoplasmic side. A helical transmembrane segment spans residues 88–108 (MQLLDELPMIYSCCIFVYCMF). Topologically, residues 109 to 118 (ECFKTKSSIN) are lumenal. A helical transmembrane segment spans residues 119–139 (YHLLFTLFLYSLTVTTIYLKV). At 140–141 (KE) the chain is on the cytoplasmic side. A helical transmembrane segment spans residues 142 to 162 (PIFHQVMYGMLVFTLVLRSIY). At 163-173 (IVTWVYPWLRG) the chain is on the lumenal side. Residues 174–194 (LGYTSLTVFLLGFLLWNIDNI) traverse the membrane as a helical segment. Residues 195–215 (FCDSLRNFRKRVPPVLGVTTQ) lie on the Cytoplasmic side of the membrane. A helical transmembrane segment spans residues 216-236 (FHAWWHILTGLGSYLHILFSL). 2 residues coordinate Zn(2+): histidine 217 and histidine 221. Over 237 to 267 (YTRTLYLRYRPKVKFLFGIWPAVMFEPQRKH) the chain is Lumenal.

The protein belongs to the alkaline ceramidase family. Zn(2+) serves as cofactor. In terms of tissue distribution, up-regulated with age in cerebeLlum and cerebrum.

It is found in the endoplasmic reticulum membrane. The protein localises to the golgi apparatus membrane. It catalyses the reaction an N-acyl-(4R)-4-hydroxysphinganine + H2O = (4R)-hydroxysphinganine + a fatty acid. The enzyme catalyses N-(5Z,8Z,11Z,14Z-eicosatetraenoyl)-sphing-4-enine + H2O = sphing-4-enine + (5Z,8Z,11Z,14Z)-eicosatetraenoate. It carries out the reaction N-(5Z,8Z,11Z,14Z-eicosatetraenoyl)-sphinganine + H2O = sphinganine + (5Z,8Z,11Z,14Z)-eicosatetraenoate. The catalysed reaction is N-(5Z,8Z,11Z,14Z-eicosatetraenoyl)-(4R)-hydroxysphinganine + H2O = (4R)-hydroxysphinganine + (5Z,8Z,11Z,14Z)-eicosatetraenoate. It catalyses the reaction N-(11Z-eicosenoyl)-sphing-4-enine + H2O = (11Z)-eicosenoate + sphing-4-enine. The enzyme catalyses N-(11Z-eicosenoyl)-sphinganine + H2O = (11Z)-eicosenoate + sphinganine. It carries out the reaction N-(11Z-eicosenoyl)-(4R)-hydroxysphinganine + H2O = (11Z)-eicosenoate + (4R)-hydroxysphinganine. The catalysed reaction is N-(9Z-octadecenoyl)-sphing-4-enine + H2O = sphing-4-enine + (9Z)-octadecenoate. It catalyses the reaction N-(9Z-octadecenoyl)-sphinganine + H2O = sphinganine + (9Z)-octadecenoate. The enzyme catalyses N-(9Z-octadecenoyl)-(4R)-hydroxysphinganine + H2O = (4R)-hydroxysphinganine + (9Z)-octadecenoate. It carries out the reaction an N-acylsphing-4-enine + H2O = sphing-4-enine + a fatty acid. The catalysed reaction is an N-acylsphinganine + H2O = sphinganine + a fatty acid. It participates in lipid metabolism; sphingolipid metabolism. Activated by Ca(2+) and inhibited by Zn(2+). Its function is as follows. Endoplasmic reticulum and Golgi ceramidase that catalyzes the hydrolysis of unsaturated long-chain C18:1-, C20:1- and C20:4-ceramides, dihydroceramides and phytoceramides into sphingoid bases like sphingosine and free fatty acids at alkaline pH. Ceramides, sphingosine, and its phosphorylated form sphingosine-1-phosphate are bioactive lipids that mediate cellular signaling pathways regulating several biological processes including cell proliferation, apoptosis and differentiation. Controls the generation of sphingosine in erythrocytes, and thereby sphingosine-1-phosphate in plasma. Through the regulation of ceramides and sphingosine-1-phosphate homeostasis in the brain may play a role in neurons survival and function. By regulating the levels of pro-inflammatory ceramides in immune cells and tissues, may modulate the inflammatory response. The protein is Alkaline ceramidase 3 (Acer3) of Mus musculus (Mouse).